The sequence spans 932 residues: MLIFTIPQFFFAAWVMVVSLQMQGYISCIEKERKGLLELKAYVNKEYSYDWSNDTKSDCCRWERVECDRTSGRVIGLFLNQTFSDPILINLSLFHPFEELRTLNLYDFGCTGWFDDIHGYKSLGKLKKLEILDMGNNEVNNSVLPFLNAASSLRTLILHGNNMEGTFPMKELKDLSNLELLDLSGNLLNGPVPGLAVLHKLHALDLSDNTFSGSLGREGLCQLKNLQELDLSQNEFTGPFPQCFSSLTQLQVLDMSSNQFNGTLPSVISNLDSLEYLSLSDNKFEGFFSFDLIANLSKLKVFKLSSKSSLLHIESEISLQLKFRLSVIDLKYCNLEAVPSFLQQQKDLRLINLSNNKLTGISPSWFLENYPKLRVLLLWNNSFTIFHLPRLLVHSLHVLDLSVNKFDEWLPNNIGHVLPNISHLNLSNNGFQGNLPSSFSEMKKIFFLDLSHNNLSGSLPKKFCIGCSSLSILKLSYNRFSGKIFPQPMKLESLRVLIADNNQFTEITDVLIHSKGLVFLELSNNSLQGVIPSWFGGFYFLYLSVSDNLLNGTIPSTLFNVSFQLLDLSRNKFSGNLPSHFSFRHMGLLYLHDNEFSGPVPSTLLENVMLLDLRNNKLSGTIPRFVSNRYFLYLLLRGNALTGHIPTSLCELKSIRVLDLANNRLNGSIPPCLNNVSFGRSLDYEIDPDFGSSYGMVRADQELEESYSRSLVLPLEFELDYSGYLDFTVEFASKRRYDSYMGESFKFMFGLDFSSNELIGEIPRELGDFQRIRALNLSHNSLSGLVPESFSNLTDIESIDLSFNVLHGPIPHDLTKLDYIVVFNVSYNNLSGLIPSQGKFLSLDVTNYIGNPFLCGTTINKSCDDNTSGFKEIDSHSGDDETAIDMETFYWSLFATYGITWMAFIVFLCFDSPWRQAWFRLVNVFVSFLKCV.

The first 28 residues, 1 to 28 (MLIFTIPQFFFAAWVMVVSLQMQGYISC), serve as a signal peptide directing secretion. Residues 29 to 888 (IEKERKGLLE…DDETAIDMET (860 aa)) are Extracellular-facing. Residues asparagine 53, asparagine 80, and asparagine 90 are each glycosylated (N-linked (GlcNAc...) asparagine). LRR repeat units follow at residues 97–122 (FEELRTLNLYDFGCTGWFDDIHGYKS), 126–152 (LKKLEILDMGNNEVNNSVLPFLNAASS), 154–174 (RTLILHGNNMEGTFPMKELKD), 175–200 (LSNLELLDLSGNLLNGPVPGLAVLHK), 202–222 (HALDLSDNTFSGSLGREGLCQ), 223–246 (LKNLQELDLSQNEFTGPFPQCFSS), 247–273 (LTQLQVLDMSSNQFNGTLPSVISNLDS), 275–295 (EYLSLSDNKFEGFFSFDLIAN), 296–320 (LSKLKVFKLSSKSSLLHIESEISLQ), 322–345 (KFRLSVIDLKYCNLEAVPSFLQQQ), 346–368 (KDLRLINLSNNKLTGISPSWFLE), 370–393 (YPKLRVLLLWNNSFTIFHLPRLLV), 394–417 (HSLHVLDLSVNKFDEWLPNNIGHV), 418–441 (LPNISHLNLSNNGFQGNLPSSFSE), 443–466 (KKIFFLDLSHNNLSGSLPKKFCIG), 468–491 (SSLSILKLSYNRFSGKIFPQPMKL), 492–514 (ESLRVLIADNNQFTEITDVLIHS), 516–535 (GLVFLELSNNSLQGVIPSWF), 536–560 (GGFYFLYLSVSDNLLNGTIPSTLFN), 561–583 (VSFQLLDLSRNKFSGNLPSHFSF), 585–605 (HMGLLYLHDNEFSGPVPSTLL), 606–629 (ENVMLLDLRNNKLSGTIPRFVSNR), 631–652 (FLYLLLRGNALTGHIPTSLCEL), 653–676 (KSIRVLDLANNRLNGSIPPCLNNV), 745–769 (FKFMFGLDFSSNELIGEIPRELGDF), 770–792 (QRIRALNLSHNSLSGLVPESFSN), 794–817 (TDIESIDLSFNVLHGPIPHDLTKL), and 819–842 (YIVVFNVSYNNLSGLIPSQGKFLS). The N-linked (GlcNAc...) asparagine glycan is linked to asparagine 140. Residues asparagine 261 and asparagine 295 are each glycosylated (N-linked (GlcNAc...) asparagine). Residues asparagine 352 and asparagine 380 are each glycosylated (N-linked (GlcNAc...) asparagine). N-linked (GlcNAc...) asparagine glycans are attached at residues asparagine 420, asparagine 425, and asparagine 454. 3 N-linked (GlcNAc...) asparagine glycosylation sites follow: asparagine 524, asparagine 551, and asparagine 560. 2 N-linked (GlcNAc...) asparagine glycosylation sites follow: asparagine 666 and asparagine 675. Residues asparagine 776 and asparagine 792 are each glycosylated (N-linked (GlcNAc...) asparagine). N-linked (GlcNAc...) asparagine glycosylation is found at asparagine 824, asparagine 829, asparagine 860, and asparagine 866. The helical transmembrane segment at 889–909 (FYWSLFATYGITWMAFIVFLC) threads the bilayer. Residues 910 to 932 (FDSPWRQAWFRLVNVFVSFLKCV) are Cytoplasmic-facing.

It belongs to the RLP family.

The protein localises to the cell membrane. This chain is Receptor-like protein 9a, found in Arabidopsis thaliana (Mouse-ear cress).